Consider the following 282-residue polypeptide: Undecaprenyl-diphosphatase (282 aa).

6 helical membrane-spanning segments follow: residues 90 to 110, 121 to 141, 165 to 185, 194 to 214, 228 to 248, and 256 to 276; these read YRLG…GLLF, LWVV…AEYL, LALV…LFLG, FGFL…LPDA, QLLV…SWFL, and MYWF…LLAT.

Belongs to the UppP family.

It localises to the cell membrane. The catalysed reaction is di-trans,octa-cis-undecaprenyl diphosphate + H2O = di-trans,octa-cis-undecaprenyl phosphate + phosphate + H(+). Its function is as follows. Catalyzes the dephosphorylation of undecaprenyl diphosphate (UPP). Confers resistance to bacitracin. This chain is Undecaprenyl-diphosphatase, found in Mycobacterium marinum (strain ATCC BAA-535 / M).